The primary structure comprises 299 residues: HTH-type transcriptional regulator CrgA (299 aa).

One can recognise an HTH lysR-type domain in the interval 1-60 (MKTNSEELTVFVQVVESGSFSRAAEQLAMANSAVSRIVKRLEEKLGVNLLNRTTRQLSLT). A DNA-binding region (H-T-H motif) is located at residues 20–39 (FSRAAEQLAMANSAVSRIVK).

Belongs to the LysR transcriptional regulatory family. In terms of assembly, forms oligomers. Oligomerization is required for DNA binding.

Its function is as follows. Involved in the regulation of bacterial adhesion to host epithelial cells. May play a central regulatory role in meningococcal adhesion, particularly in switching from initial adhesion to intimate adhesion by downregulating the bacterial surface structures that hinder this adhesion. During intimate adhesion, negatively regulates the expression of pilC1, encoding a pilus-associated protein, pilE, encoding the pilin, and sia genes, encoding the capsule. Also negatively regulates its own expression. May also regulate other genes that are involved in intimate adhesion. Binds specifically to the promoter region of pilC1 and crgA (both harboring a CREN element), and pilE and sia (both devoid of a CREN element). Acts through interaction with RNA polymerase (RNAP). Interaction with RNAP leads to the production of short abortive transcripts, suggesting that CrgA may act by preventing RNAP from clearing the promoter. This Neisseria meningitidis serogroup C (strain 8013) protein is HTH-type transcriptional regulator CrgA.